A 120-amino-acid polypeptide reads, in one-letter code: UPF0102 protein CbuK_0265 (120 aa).

Belongs to the UPF0102 family.

This chain is UPF0102 protein CbuK_0265, found in Coxiella burnetii (strain CbuK_Q154) (Coxiella burnetii (strain Q154)).